Here is a 509-residue protein sequence, read N- to C-terminus: Nucleoprotein (509 aa).

The tract at residues 1-404 (MSSVLKAYER…ANTLAKLTTA (404 aa)) is ncore. RNA is bound by residues K180, R195, Y260, Y350, and R354. Positions 405–509 (NRGADTRGGV…LNAALGDLDI (105 aa)) are ntail. Positions 452–477 (GTHDDEMPPLEEEEEDDTSAGPRTGP) are disordered. Residues 458-469 (MPPLEEEEEDDT) are compositionally biased toward acidic residues.

The protein belongs to the paramyxoviruses nucleocapsid family. As to quaternary structure, homomultimer; forms the nucleocapsid. Binds to the viral genomic RNA. N0 interacts with the phosphoprotein (via N-terminus); this interaction allows P to chaperon N0 to avoid N polymerization before encapsidation. Interacts as N-RNA template with the phosphoprotein (via C-terminus); this interaction positions the polymerase on the template.

Its subcellular location is the virion. The protein localises to the host cytoplasm. Functionally, forms the helical nucleocapsid (NC), protecting the genome from nucleases. The encapsidated genomic RNA serves as template for transcription and replication; encapsidation by N is coupled to RNA synthesis. Forms the encapsidation complex with the phosphoprotein protein P. Before encapsidation, the newly synthesized free N protein, so-called N0, is chaperoned by P. In Canis lupus familiaris (Dog), this protein is Nucleoprotein (NP).